Here is a 491-residue protein sequence, read N- to C-terminus: Glucose-6-phosphate 1-dehydrogenase (491 aa).

Arg51 and Lys150 together coordinate NADP(+). Residues His180, Lys184, Glu218, and Asp237 each coordinate substrate. Catalysis depends on His242, which acts as the Proton acceptor. A substrate-binding site is contributed by Lys341.

It belongs to the glucose-6-phosphate dehydrogenase family.

It catalyses the reaction D-glucose 6-phosphate + NADP(+) = 6-phospho-D-glucono-1,5-lactone + NADPH + H(+). The protein operates within carbohydrate degradation; pentose phosphate pathway; D-ribulose 5-phosphate from D-glucose 6-phosphate (oxidative stage): step 1/3. Functionally, catalyzes the oxidation of glucose 6-phosphate to 6-phosphogluconolactone. The sequence is that of Glucose-6-phosphate 1-dehydrogenase from Rhizobium meliloti (strain 1021) (Ensifer meliloti).